A 179-amino-acid polypeptide reads, in one-letter code: MPKLSIVVAPDERLTTRASEVTGINDKIKELVNDMFETMYNAEGLGLAAVQIGVLKRIFVMDIQLEDIKGEPVGYESTGKFCMINPEITELSDEQVILKEGCLSIPEQSHEIRRPKYLTVKYKDLNNKEQTLKASGWLARCIQHELDHLNGILYIRHLSKLKYDMAMKKAEKFKRHYER.

Fe cation is bound by residues Cys102 and His144. Glu145 is a catalytic residue. His148 contacts Fe cation.

This sequence belongs to the polypeptide deformylase family. Requires Fe(2+) as cofactor.

The catalysed reaction is N-terminal N-formyl-L-methionyl-[peptide] + H2O = N-terminal L-methionyl-[peptide] + formate. Functionally, removes the formyl group from the N-terminal Met of newly synthesized proteins. Requires at least a dipeptide for an efficient rate of reaction. N-terminal L-methionine is a prerequisite for activity but the enzyme has broad specificity at other positions. The chain is Peptide deformylase from Wolbachia sp. subsp. Brugia malayi (strain TRS).